The primary structure comprises 537 residues: Proline--tRNA ligase (537 aa).

It belongs to the class-II aminoacyl-tRNA synthetase family. ProS type 3 subfamily. Homodimer.

It is found in the cytoplasm. The catalysed reaction is tRNA(Pro) + L-proline + ATP = L-prolyl-tRNA(Pro) + AMP + diphosphate. Catalyzes the attachment of proline to tRNA(Pro) in a two-step reaction: proline is first activated by ATP to form Pro-AMP and then transferred to the acceptor end of tRNA(Pro). The protein is Proline--tRNA ligase of Nanoarchaeum equitans (strain Kin4-M).